Here is a 1363-residue protein sequence, read N- to C-terminus: ABC multidrug transporter MDR2 (1363 aa).

A helical transmembrane segment spans residues 65–85 (IALIVIGTIAGIGAGIPFPLL). Residues 69–367 (VIGTIAGIGA…MAPFMHIFAS (299 aa)) form the ABC transmembrane type-1 1 domain. A glycan (N-linked (GlcNAc...) asparagine) is linked at Asn97. 5 helical membrane-spanning segments follow: residues 119–139 (VLQV…HTGC), 193–213 (KVGL…VAFL), 215–235 (VATI…MAFG), 301–321 (IQFG…FWQG), and 336–356 (VSVG…FVLS). The ABC transporter 1 domain maps to 403–682 (IELQDVTFNY…DGVYAGMVRL (280 aa)). 438–445 (GTSGSGKS) contacts ATP. 2 N-linked (GlcNAc...) asparagine glycosylation sites follow: Asn552 and Asn633. The disordered stretch occupies residues 738–758 (YMPEEADSLPTEPENEKEKPK). 3 consecutive transmembrane segments (helical) span residues 781 to 801 (LGLI…VIFG), 820 to 840 (GMLF…AVIV), and 896 to 916 (LTGT…AGVI). The 272-residue stretch at 781-1052 (LGLITSIMIG…MFALVPDISK (272 aa)) folds into the ABC transmembrane type-1 2 domain. A glycan (N-linked (GlcNAc...) asparagine) is linked at Asn973. 2 helical membrane passes run 992–1012 (FWLS…YWWG) and 1016–1036 (ILAG…LLFS). In terms of domain architecture, ABC transporter 2 spans 1119–1358 (VQFRNVHFRY…CESYRANVIH (240 aa)). An ATP-binding site is contributed by 1154-1161 (GPSGSGKS).

It belongs to the ABC transporter superfamily. ABCB family. Multidrug resistance exporter (TC 3.A.1.201) subfamily.

The protein localises to the cell membrane. Its function is as follows. Pleiotropic ABC efflux transporter that may be involved in the modulation susceptibility to a wide range of unrelated cytotoxic compounds. The sequence is that of ABC multidrug transporter MDR2 from Trichophyton tonsurans (strain CBS 112818) (Scalp ringworm fungus).